The chain runs to 250 residues: Hydroxyethylthiazole kinase (250 aa).

Substrate is bound at residue Met39. The ATP site is built by Arg114 and Thr159. A substrate-binding site is contributed by Gly186.

It belongs to the Thz kinase family. It depends on Mg(2+) as a cofactor.

It catalyses the reaction 5-(2-hydroxyethyl)-4-methylthiazole + ATP = 4-methyl-5-(2-phosphooxyethyl)-thiazole + ADP + H(+). Its pathway is cofactor biosynthesis; thiamine diphosphate biosynthesis; 4-methyl-5-(2-phosphoethyl)-thiazole from 5-(2-hydroxyethyl)-4-methylthiazole: step 1/1. In terms of biological role, catalyzes the phosphorylation of the hydroxyl group of 4-methyl-5-beta-hydroxyethylthiazole (THZ). The polypeptide is Hydroxyethylthiazole kinase (Lactococcus lactis subsp. cremoris (strain MG1363)).